A 756-amino-acid chain; its full sequence is Putative DNA ligase 052L (756 aa).

Catalysis depends on Lys103, which acts as the N6-AMP-lysine intermediate. Residues 610-620 show a composition bias toward low complexity; sequence PSAAGSASPCR. Positions 610 to 630 are disordered; the sequence is PSAAGSASPCRPTKRRDDWFD. The BRCT domain maps to 648-742; it reads KKRPPMQGYV…LKRQRKCRAR (95 aa).

Belongs to the NAD-dependent DNA ligase family.

The enzyme catalyses NAD(+) + (deoxyribonucleotide)n-3'-hydroxyl + 5'-phospho-(deoxyribonucleotide)m = (deoxyribonucleotide)n+m + AMP + beta-nicotinamide D-nucleotide.. Its function is as follows. Catalyzes the formation of phosphodiester linkages between 5'-phosphoryl and 3'-hydroxyl groups in double-stranded DNA using NAD as a coenzyme and as the energy source for the reaction. In Invertebrate iridescent virus 3 (IIV-3), this protein is Putative DNA ligase 052L.